The chain runs to 924 residues: Exocyst complex component 2 (924 aa).

The IPT/TIG domain maps to 8 to 93; it reads PLVTGISPNE…GTSTVSFKLL (86 aa). Positions 240-260 form a coiled coil; sequence QKLENVLNRASNTADTLFQEV. A phosphoserine mark is found at Ser-431, Ser-432, and Ser-435. Position 440 is a phosphothreonine (Thr-440). Lys-454 is modified (N6-acetyllysine). Ser-888 carries the phosphoserine modification.

The protein belongs to the SEC5 family. In terms of assembly, the exocyst complex is composed of EXOC1, EXOC2, EXOC3, EXOC4, EXOC5, EXOC6, EXOC7 and EXOC8. Interacts with EXOC3L1. Interacts with GNEFR/DELGEF; this interaction occurs only in the presence of magnesium or manganese and is stimulated by dCTP or GTP. Interacts with RALA and RALB. Interacts with ARL13B; regulates ARL13B localization to the cilium membrane. In terms of tissue distribution, widely expressed with highest levels in brain and placenta.

It localises to the midbody. Its subcellular location is the midbody ring. In terms of biological role, component of the exocyst complex involved in the docking of exocytic vesicles with fusion sites on the plasma membrane. The polypeptide is Exocyst complex component 2 (EXOC2) (Homo sapiens (Human)).